The chain runs to 429 residues: Forkhead box protein A1-A (429 aa).

Residues 159–253 constitute a DNA-binding region (fork-head); that stretch reads KPPYSYISLI…ENGCYLRRQK (95 aa). The span at 258–274 shows a compositional bias: basic and acidic residues; that stretch reads EKTQGGKGNQDGRKDHS. Residues 258 to 341 are disordered; it reads EKTQGGKGNQ…HSTHSLAHES (84 aa). The span at 287-304 shows a compositional bias: low complexity; it reads SSQMDSSSSMSNPSSSPQ. The span at 325–336 shows a compositional bias: polar residues; that stretch reads PLSSHQNHSTHS.

As to expression, at neurula stage, expressed in the notochord but not in the neural floor plate. During tailbud stages, expressed in the neural floor plate. At stage 35, expressed in the rhombencephalon, mesencephalon, pharyngeal pouches, foregut and pronephros. At stage 44, expressed in a region of the gut on the right hand side of the embryo. Expressed in the adult lung and liver.

Its subcellular location is the nucleus. Functionally, probable transcription factor. The protein is Forkhead box protein A1-A (foxa1-a) of Xenopus laevis (African clawed frog).